The chain runs to 138 residues: Translation initiation factor 5A (138 aa).

Hypusine is present on lysine 37.

The protein belongs to the eIF-5A family.

It localises to the cytoplasm. Its function is as follows. Functions by promoting the formation of the first peptide bond. The polypeptide is Translation initiation factor 5A (Pyrococcus furiosus (strain ATCC 43587 / DSM 3638 / JCM 8422 / Vc1)).